Reading from the N-terminus, the 151-residue chain is Guanylate kinase homolog (151 aa).

Residues 1–141 (MEREGVDYHY…AYSKLIQILQ (141 aa)) enclose the Guanylate kinase-like domain.

This sequence belongs to the guanylate kinase family.

This chain is Guanylate kinase homolog, found in Vaccinia virus (strain Copenhagen) (VACV).